A 311-amino-acid polypeptide reads, in one-letter code: MTNKVIQRNIHISHRKASLVIDLVRNKPVHEAIRILSNTPKKFAPIVLKLLNSAISNVQHNSKDMDPSKLYIYKIVANQGPTMKRTLPRAKGSADQLFKRTTHLEIVLSDDVNEREKELAAIKAKKSKKPLAVEPIAKVETKKVAKPSKVEIKPVEKDENVDPELLKREQQVLKVVEKTASQKEEETTETIMISTSPKNAQVLFDDLEKNVIFYKTTPINKVLRVLVYVTSPTKKVVGEFDLESVEIGAISSIWRKYSKQSVISKKEYDAYYEGKDKAHALVSKKAYKYRNPKDLSEYNMTKGPSGFQYLK.

Belongs to the universal ribosomal protein uL22 family. Part of the 50S ribosomal subunit.

This protein binds specifically to 23S rRNA; its binding is stimulated by other ribosomal proteins, e.g. L4, L17, and L20. It is important during the early stages of 50S assembly. It makes multiple contacts with different domains of the 23S rRNA in the assembled 50S subunit and ribosome. Functionally, the globular domain of the protein is located near the polypeptide exit tunnel on the outside of the subunit, while an extended beta-hairpin is found that lines the wall of the exit tunnel in the center of the 70S ribosome. This chain is Large ribosomal subunit protein uL22 (rplV), found in Ureaplasma parvum serovar 3 (strain ATCC 27815 / 27 / NCTC 11736).